The following is a 97-amino-acid chain: Plastocyanin (97 aa).

The Plastocyanin-like domain occupies 1–97 (AEVKLGADDG…AGMKGEVTVT (97 aa)). Residues H37, C82, H85, and M90 each coordinate Cu cation.

Belongs to the plastocyanin family. It depends on Cu(2+) as a cofactor.

The protein localises to the plastid. The protein resides in the chloroplast thylakoid membrane. Functionally, participates in electron transfer between P700 and the cytochrome b6-f complex in photosystem I. In Daucus carota (Wild carrot), this protein is Plastocyanin (PETE).